A 201-amino-acid chain; its full sequence is Recombination protein RecR (201 aa).

The C4-type zinc finger occupies 57-72 (CQVCYSLSDNDICDIC). Residues 80–177 (NKICIVESYP…RITRITYGIS (98 aa)) enclose the Toprim domain.

This sequence belongs to the RecR family.

In terms of biological role, may play a role in DNA repair. It seems to be involved in an RecBC-independent recombinational process of DNA repair. It may act with RecF and RecO. This Brachyspira hyodysenteriae (strain ATCC 49526 / WA1) protein is Recombination protein RecR.